The primary structure comprises 643 residues: Fructose-1,6-bisphosphatase class 3 (643 aa).

The protein belongs to the FBPase class 3 family. Requires Mn(2+) as cofactor.

It catalyses the reaction beta-D-fructose 1,6-bisphosphate + H2O = beta-D-fructose 6-phosphate + phosphate. Its pathway is carbohydrate biosynthesis; gluconeogenesis. The chain is Fructose-1,6-bisphosphatase class 3 from Lacticaseibacillus casei (strain BL23) (Lactobacillus casei).